Consider the following 876-residue polypeptide: GATOR2 complex protein MIOS (876 aa).

WD repeat units lie at residues 59 to 101 (SDTP…NSKS), 112 to 156 (KHAR…SPEA), 182 to 222 (GQND…QKTF), 224 to 262 (NTKA…KPVF), 266 to 307 (EQPK…MPFG), and 400 to 440 (RAQS…KQYT). A C4-type zinc finger spans residues 738-784 (VSCNFCGKSISYSCSAMPHQGRGFSQYGVSGSPTKSKVTSCPGCRKP). Zn(2+)-binding residues include cysteine 740, cysteine 743, cysteine 778, cysteine 781, cysteine 791, cysteine 830, cysteine 833, histidine 835, histidine 838, histidine 841, cysteine 852, cysteine 857, and cysteine 861. An RING-type; atypical zinc finger spans residues 785–866 (LPRCALCLMN…CTCKCMQLDT (82 aa)).

The protein belongs to the WD repeat mio family. As to quaternary structure, component of the GATOR2 subcomplex, composed of MIOS, SEC13, SEH1L, WDR24 and WDR59. The GATOR2 complex interacts with CASTOR1 and CASTOR2; the interaction is negatively regulated by arginine. The GATOR2 complex interacts with SESN1, SESN2 and SESN3; the interaction is negatively regulated by amino acids. Interacts with SAR1; the interaction is direct, disrupted by leucine and mediates the interaction of SAR1 with the GATOR2 complex to negatively regulate the TORC1 signaling upon leucine deprivation.

It is found in the lysosome membrane. The GATOR2 complex is negatively regulated by the upstream amino acid sensors CASTOR1 and SESN2, which sequester the GATOR2 complex in absence of amino acids. In the presence of abundant amino acids, GATOR2 is released from CASTOR1 and SESN2 and activated. Functionally, as a component of the GATOR2 complex, functions as an activator of the amino acid-sensing branch of the mTORC1 signaling pathway. The GATOR2 complex indirectly activates mTORC1 through the inhibition of the GATOR1 subcomplex. GATOR2 probably acts as an E3 ubiquitin-protein ligase toward GATOR1. In the presence of abundant amino acids, the GATOR2 complex mediates ubiquitination of the NPRL2 core component of the GATOR1 complex, leading to GATOR1 inactivation. In the absence of amino acids, GATOR2 is inhibited, activating the GATOR1 complex. Within the GATOR2 complex, MIOS is required to prevent autoubiquitination of WDR24, the catalytic subunit of the complex. The sequence is that of GATOR2 complex protein MIOS from Danio rerio (Zebrafish).